Reading from the N-terminus, the 149-residue chain is Calmodulin (149 aa).

The residue at position 2 (A2) is an N-acetylalanine. 4 consecutive EF-hand domains span residues 8-43 (EQIA…LGQN), 44-79 (PTEA…KMKD), 81-116 (DSEE…LGEK), and 117-149 (LTDE…MTSK). Residues D21, D23, D25, T27, E32, D57, D59, D61, T63, E68, D94, D96, N98, and E105 each coordinate Ca(2+). N6,N6,N6-trimethyllysine is present on K116. Residues D130, D132, D134, Q136, and E141 each coordinate Ca(2+).

This sequence belongs to the calmodulin family.

Calmodulin mediates the control of a large number of enzymes, ion channels and other proteins by Ca(2+). Among the enzymes to be stimulated by the calmodulin-Ca(2+) complex are a number of protein kinases and phosphatases. The polypeptide is Calmodulin (Pyuridae sp. (Sea squirt)).